The chain runs to 719 residues: Photosystem I P700 chlorophyll a apoprotein A1 (719 aa).

8 consecutive transmembrane segments (helical) span residues 61–84 (VFSAHFGQLAIIFIWLSGMYFHGA), 147–170 (LYCTATGALIFAALMLFAGWFHYH), 186–210 (LNHHLAGLLGLGSLGWAGHQVHVSL), 282–300 (TAHHHLAIAILFLIAGHMY), 337–360 (WHAQLALNLAMLGSLTIVVAHHMY), 376–402 (LSLFTHHMWIGGFLIVGAAAHAAIFMV), 424–446 (AIVSHLNWACIFLGFHSFGLYIH), and 522–540 (FLVHHIHAFTIHVTVLILL). Cys564 and Cys573 together coordinate [4Fe-4S] cluster. Helical transmembrane passes span 580 to 601 (HVFLGLFWMYNAISVVIFHFSW) and 655 to 677 (LSAYGLFFLGAHFVWAFSLMFLF). Chlorophyll a' is bound at residue His666. 2 residues coordinate chlorophyll a: Met674 and Tyr682. Trp683 contributes to the phylloquinone binding site. The helical transmembrane segment at 715–719 (AVGVA) threads the bilayer.

Belongs to the PsaA/PsaB family. The PsaA/B heterodimer binds the P700 chlorophyll special pair and subsequent electron acceptors. PSI consists of a core antenna complex that captures photons, and an electron transfer chain that converts photonic excitation into a charge separation. The eukaryotic PSI reaction center is composed of at least 11 subunits. P700 is a chlorophyll a/chlorophyll a' dimer, A0 is one or more chlorophyll a, A1 is one or both phylloquinones and FX is a shared 4Fe-4S iron-sulfur center. serves as cofactor.

It localises to the plastid. The protein resides in the chloroplast thylakoid membrane. The enzyme catalyses reduced [plastocyanin] + hnu + oxidized [2Fe-2S]-[ferredoxin] = oxidized [plastocyanin] + reduced [2Fe-2S]-[ferredoxin]. In terms of biological role, psaA and PsaB bind P700, the primary electron donor of photosystem I (PSI), as well as the electron acceptors A0, A1 and FX. PSI is a plastocyanin-ferredoxin oxidoreductase, converting photonic excitation into a charge separation, which transfers an electron from the donor P700 chlorophyll pair to the spectroscopically characterized acceptors A0, A1, FX, FA and FB in turn. Oxidized P700 is reduced on the lumenal side of the thylakoid membrane by plastocyanin. This Torreya californica (California nutmeg) protein is Photosystem I P700 chlorophyll a apoprotein A1.